The primary structure comprises 175 residues: ATP-dependent protease subunit HslV (175 aa).

Residue Thr-5 is part of the active site. Na(+) is bound by residues Gly-160, Asp-163, and Thr-166.

The protein belongs to the peptidase T1B family. HslV subfamily. In terms of assembly, a double ring-shaped homohexamer of HslV is capped on each side by a ring-shaped HslU homohexamer. The assembly of the HslU/HslV complex is dependent on binding of ATP.

The protein resides in the cytoplasm. It catalyses the reaction ATP-dependent cleavage of peptide bonds with broad specificity.. With respect to regulation, allosterically activated by HslU binding. Functionally, protease subunit of a proteasome-like degradation complex believed to be a general protein degrading machinery. This Myxococcus xanthus protein is ATP-dependent protease subunit HslV.